The sequence spans 63 residues: Large ribosomal subunit protein uL29 (63 aa).

This sequence belongs to the universal ribosomal protein uL29 family.

The protein is Large ribosomal subunit protein uL29 of Histophilus somni (strain 129Pt) (Haemophilus somnus).